Here is a 185-residue protein sequence, read N- to C-terminus: Ribosome-recycling factor (185 aa).

This sequence belongs to the RRF family.

The protein localises to the cytoplasm. In terms of biological role, responsible for the release of ribosomes from messenger RNA at the termination of protein biosynthesis. May increase the efficiency of translation by recycling ribosomes from one round of translation to another. This chain is Ribosome-recycling factor, found in Vibrio parahaemolyticus serotype O3:K6 (strain RIMD 2210633).